We begin with the raw amino-acid sequence, 201 residues long: GTP cyclohydrolase 1 (201 aa).

Positions 90, 93, and 163 each coordinate Zn(2+).

The protein belongs to the GTP cyclohydrolase I family. In terms of assembly, toroid-shaped homodecamer, composed of two pentamers of five dimers.

It carries out the reaction GTP + H2O = 7,8-dihydroneopterin 3'-triphosphate + formate + H(+). The protein operates within cofactor biosynthesis; 7,8-dihydroneopterin triphosphate biosynthesis; 7,8-dihydroneopterin triphosphate from GTP: step 1/1. This is GTP cyclohydrolase 1 (folE) from Streptomyces coelicolor (strain ATCC BAA-471 / A3(2) / M145).